A 776-amino-acid polypeptide reads, in one-letter code: 5-methyltetrahydropteroyltriglutamate--homocysteine methyltransferase (776 aa).

Residues 16 to 19 (RELK) and Lys112 contribute to the 5-methyltetrahydropteroyltri-L-glutamate site. L-homocysteine-binding positions include 435–437 (IGS) and Glu488. L-methionine-binding positions include 435 to 437 (IGS) and Glu488. 5-methyltetrahydropteroyltri-L-glutamate contacts are provided by residues 519–520 (RC) and Trp565. Asp603 contacts L-homocysteine. Asp603 contacts L-methionine. Glu609 contacts 5-methyltetrahydropteroyltri-L-glutamate. 3 residues coordinate Zn(2+): His645, Cys647, and Glu669. His698 acts as the Proton donor in catalysis. Position 730 (Cys730) interacts with Zn(2+).

Belongs to the vitamin-B12 independent methionine synthase family. Requires Zn(2+) as cofactor.

It catalyses the reaction 5-methyltetrahydropteroyltri-L-glutamate + L-homocysteine = tetrahydropteroyltri-L-glutamate + L-methionine. It functions in the pathway amino-acid biosynthesis; L-methionine biosynthesis via de novo pathway; L-methionine from L-homocysteine (MetE route): step 1/1. Its function is as follows. Catalyzes the transfer of a methyl group from 5-methyltetrahydrofolate to homocysteine resulting in methionine formation. The protein is 5-methyltetrahydropteroyltriglutamate--homocysteine methyltransferase of Ralstonia pickettii (strain 12J).